Consider the following 466-residue polypeptide: Asparagine--tRNA ligase (466 aa).

This sequence belongs to the class-II aminoacyl-tRNA synthetase family. Homodimer.

The protein localises to the cytoplasm. It catalyses the reaction tRNA(Asn) + L-asparagine + ATP = L-asparaginyl-tRNA(Asn) + AMP + diphosphate + H(+). The protein is Asparagine--tRNA ligase of Shewanella oneidensis (strain ATCC 700550 / JCM 31522 / CIP 106686 / LMG 19005 / NCIMB 14063 / MR-1).